A 101-amino-acid chain; its full sequence is Putative antitoxin HigA2 (101 aa).

The HTH cro/C1-type domain occupies 35–90; that stretch reads LRELRAAQSLTQVQVAALAHIRQSRVSSIENGDIGSAQVNTLRKYVSALGGELDIT. The segment at residues 46–65 is a DNA-binding region (H-T-H motif); that stretch reads QVQVAALAHIRQSRVSSIEN.

In terms of biological role, putative antitoxin component of a type II toxin-antitoxin (TA) system. Its cognate toxin would be HigB2. In Mycobacterium tuberculosis (strain ATCC 25618 / H37Rv), this protein is Putative antitoxin HigA2.